Consider the following 404-residue polypeptide: MKTPIYLDYAATTPVEFEVAKKMMNYLTIDGVFGNSASRSHKFGWKAEEVVDIARNQISELIGADSREIVFTSGATESNNLAIKGIASFHQNKGKHIVTSKTEHKSVLDTCRYLENKGFTVTYLTPKNNGIIDLNNLKKNIKKDTILVSIMHVNNEIGIIQDINSISQICRNHGVFFHVDATQSVGKIPIDLKKIPIDLMSFSAHKIYGPKGIGGLYVRRKPRVRLLSLIHGGGHERGMRSGTLPVHQIVGMGESFVLAKRKIHDDFIHLTKLKNILWNGIKNIEEVYLNSDLQQGAPHILNVSFNYVEGESLIMALKDLAISSGSACTSASLEPSYVLKSLGIRDELAHSSIRFSIGRFTTEKEIIHAIKLVHKSIHRLRELSPLWEMFKSGVDLNSIEWDHV.

Pyridoxal 5'-phosphate is bound by residues 75 to 76, asparagine 155, glutamine 183, and 203 to 205; these read AT and SAH. At lysine 206 the chain carries N6-(pyridoxal phosphate)lysine. Threonine 243 is a pyridoxal 5'-phosphate binding site. Catalysis depends on cysteine 328, which acts as the Cysteine persulfide intermediate. Cysteine 328 serves as a coordination point for [2Fe-2S] cluster.

Belongs to the class-V pyridoxal-phosphate-dependent aminotransferase family. NifS/IscS subfamily. As to quaternary structure, homodimer. Forms a heterotetramer with IscU, interacts with other sulfur acceptors. It depends on pyridoxal 5'-phosphate as a cofactor.

It is found in the cytoplasm. The catalysed reaction is (sulfur carrier)-H + L-cysteine = (sulfur carrier)-SH + L-alanine. The protein operates within cofactor biosynthesis; iron-sulfur cluster biosynthesis. Master enzyme that delivers sulfur to a number of partners involved in Fe-S cluster assembly, tRNA modification or cofactor biosynthesis. Catalyzes the removal of elemental sulfur atoms from cysteine to produce alanine. Functions as a sulfur delivery protein for Fe-S cluster synthesis onto IscU, an Fe-S scaffold assembly protein, as well as other S acceptor proteins. This Buchnera aphidicola subsp. Acyrthosiphon pisum (strain 5A) protein is Cysteine desulfurase IscS.